We begin with the raw amino-acid sequence, 469 residues long: Beta-1,3-xylanase (469 aa).

The N-terminal stretch at 1–22 (MKKLAKMISIATLGACAFSAHA) is a signal peptide. Residues 23-293 (LDGKLVPNEG…LKGFTYINAD (271 aa)) enclose the GH26 domain. Glu138 serves as the catalytic Proton donor. Glu234 acts as the Nucleophile in catalysis. A compositionally biased stretch (gly residues) spans 352–374 (DNGGDNGGDNGGDNGGDNGGDNG). Residues 352–380 (DNGGDNGGDNGGDNGGDNGGDNGGTEPPE) are disordered. The carbohydrate binding module (CBM) stretch occupies residues 377 to 469 (EPPENCQDDF…NITFTTQVCN (93 aa)). 2 disulfides stabilise this stretch: Cys382/Cys468 and Cys413/Cys418.

It belongs to the glycosyl hydrolase 26 family.

It carries out the reaction Random hydrolysis of (1-&gt;3)-beta-D-glycosidic linkages in (1-&gt;3)-beta-D-xylans.. Completely inhibited by CuCl(2), FeCl(3), HgCl(2) and N-bromosuccinimide. Moderately inhibited by AgCl, AlCl(3), Pb(CH(3)COO)(2) and dithiothreitol. BaCl(2), CaCl(2), KCl, MgCl(2), MnCl(2), NaCl, ZnCl(2), ethylenediaminetetraacetic acid, N-ethylmaleimide, iodoacetic acid and p-chloromercuribenzoic acid have little or no effect on activity. Its function is as follows. Catalyzes the hydrolysis of beta-1,3-xylan into oligosaccharides, mainly xylotriose and xylobiose with smaller amounts of xylotetraose, xylose, xylopentaose and xylohexaose. Does not hydrolyze xylobiose, p-nitrophenyl-beta-xyloside, beta-1,4-xylan, carboxymethylcellulose, curdlan, glucomannan or beta-1,4-mannan. In Alcaligenes sp, this protein is Beta-1,3-xylanase.